A 215-amino-acid polypeptide reads, in one-letter code: 3-demethoxyubiquinol 3-hydroxylase (215 aa).

Fe cation-binding residues include E64, E94, H97, E146, E178, and H181.

This sequence belongs to the COQ7 family. It depends on Fe cation as a cofactor.

Its subcellular location is the cell membrane. It carries out the reaction a 5-methoxy-2-methyl-3-(all-trans-polyprenyl)benzene-1,4-diol + AH2 + O2 = a 3-demethylubiquinol + A + H2O. It functions in the pathway cofactor biosynthesis; ubiquinone biosynthesis. Its function is as follows. Catalyzes the hydroxylation of 2-nonaprenyl-3-methyl-6-methoxy-1,4-benzoquinol during ubiquinone biosynthesis. In Pseudomonas savastanoi pv. phaseolicola (strain 1448A / Race 6) (Pseudomonas syringae pv. phaseolicola (strain 1448A / Race 6)), this protein is 3-demethoxyubiquinol 3-hydroxylase.